The chain runs to 265 residues: Tryptophan synthase alpha chain (265 aa).

Residues glutamate 48 and aspartate 59 each act as proton acceptor in the active site.

It belongs to the TrpA family. In terms of assembly, tetramer of two alpha and two beta chains.

It catalyses the reaction (1S,2R)-1-C-(indol-3-yl)glycerol 3-phosphate + L-serine = D-glyceraldehyde 3-phosphate + L-tryptophan + H2O. It participates in amino-acid biosynthesis; L-tryptophan biosynthesis; L-tryptophan from chorismate: step 5/5. Functionally, the alpha subunit is responsible for the aldol cleavage of indoleglycerol phosphate to indole and glyceraldehyde 3-phosphate. The protein is Tryptophan synthase alpha chain of Pelagibacter ubique (strain HTCC1062).